Consider the following 343-residue polypeptide: Cytoplasmic tRNA 2-thiolation protein 1 (343 aa).

Belongs to the TtcA family. CTU1/NCS6/ATPBD3 subfamily.

The protein localises to the cytoplasm. It functions in the pathway tRNA modification; 5-methoxycarbonylmethyl-2-thiouridine-tRNA biosynthesis. In terms of biological role, plays a central role in 2-thiolation of mcm(5)S(2)U at tRNA wobble positions of tRNA(Lys), tRNA(Glu) and tRNA(Gln). Directly binds tRNAs and probably acts by catalyzing adenylation of tRNAs, an intermediate required for 2-thiolation. It is unclear whether it acts as a sulfurtransferase that transfers sulfur from thiocarboxylated URM1 onto the uridine of tRNAs at wobble position. In Drosophila virilis (Fruit fly), this protein is Cytoplasmic tRNA 2-thiolation protein 1.